The chain runs to 252 residues: Protein PF0476 (252 aa).

The protein belongs to the CinA family.

The polypeptide is Protein PF0476 (Pyrococcus furiosus (strain ATCC 43587 / DSM 3638 / JCM 8422 / Vc1)).